The primary structure comprises 502 residues: ATP synthase subunit alpha (502 aa).

169 to 176 (GDRQTGKT) is an ATP binding site.

The protein belongs to the ATPase alpha/beta chains family. As to quaternary structure, F-type ATPases have 2 components, CF(1) - the catalytic core - and CF(0) - the membrane proton channel. CF(1) has five subunits: alpha(3), beta(3), gamma(1), delta(1), epsilon(1). CF(0) has three main subunits: a(1), b(2) and c(9-12). The alpha and beta chains form an alternating ring which encloses part of the gamma chain. CF(1) is attached to CF(0) by a central stalk formed by the gamma and epsilon chains, while a peripheral stalk is formed by the delta and b chains.

The protein resides in the cell membrane. The enzyme catalyses ATP + H2O + 4 H(+)(in) = ADP + phosphate + 5 H(+)(out). In terms of biological role, produces ATP from ADP in the presence of a proton gradient across the membrane. The alpha chain is a regulatory subunit. This is ATP synthase subunit alpha from Bacillus pumilus (strain SAFR-032).